A 468-amino-acid chain; its full sequence is Tapasin-related protein (468 aa).

Positions 1-18 (MGTQEGWCLLLCLALSGA) are cleaved as a signal peptide. Topologically, residues 19–405 (AETKPHPAEG…STQVVPPERR (387 aa)) are lumenal. Positions 181–297 (PQGTVRTAVE…SLYRAQQIIQ (117 aa)) constitute an Ig-like V-type domain. Intrachain disulfides connect Cys-212/Cys-283 and Cys-321/Cys-382. Residues 304-394 (PKVRLSLANE…THISLEEPLG (91 aa)) enclose the Ig-like C1-type domain. The chain crosses the membrane as a helical span at residues 406 to 426 (TALGVIFASSLFLLALMFLGL). Topologically, residues 427–468 (QRRQAPTGLGLLQAERWETTSCADTQSSHLHEDRTARVSQPS) are cytoplasmic. Residues 449–468 (ADTQSSHLHEDRTARVSQPS) are disordered.

Interacts with peptide-free HLA-A*02-B2M complexes or those loaded with low affinity peptides, likely facilitating peptide exchange onto higher affinity peptides. Interacts with MR1 in a ligand-independent way; this interaction may stabilize MR1 pool and facilitate ligand loading and dissociation.

It localises to the cell membrane. Its subcellular location is the endoplasmic reticulum membrane. The protein resides in the microsome membrane. The protein localises to the golgi apparatus membrane. Its function is as follows. Component of the antigen processing and presentation pathway, which binds to MHC class I coupled with beta2-microglobulin/B2M. Association between TAPBPR and MHC class I occurs in the absence of a functional peptide-loading complex (PLC). The protein is Tapasin-related protein (TAPBPL) of Homo sapiens (Human).